The sequence spans 186 residues: GPI-anchored hemophore ARB_02741 (186 aa).

The signal sequence occupies residues 1–18 (MKFSQAVIALAAATVVSA). The 90-residue stretch at 19–108 (QLPDVPQCSL…SSKPSEPSTS (90 aa)) folds into the CFEM domain. Cystine bridges form between Cys-26/Cys-67, Cys-30/Cys-62, Cys-40/Cys-48, and Cys-50/Cys-83. Asp-45 contacts heme. The interval 89–159 (PVSIPPVEES…NTGVPTQSTP (71 aa)) is disordered. The span at 96–131 (EESSSKPSEPSTSEAPTASPTESTPAPTTPAPTGTG) shows a compositional bias: low complexity. Gly residues predominate over residues 132 to 144 (SPSGTGAPGGPSG). Polar residues predominate over residues 148 to 159 (FTNTGVPTQSTP). Gly-163 is lipidated: GPI-anchor amidated glycine. Positions 164 to 186 (AASGLSANIGGMGAAILAIAAYL) are cleaved as a propeptide — removed in mature form.

Belongs to the RBT5 family. The GPI-anchor is attached to the protein in the endoplasmic reticulum and serves to target the protein to the cell surface. There, the glucosamine-inositol phospholipid moiety is cleaved off and the GPI-modified mannoprotein is covalently attached via its lipidless GPI glycan remnant to the 1,6-beta-glucan of the outer cell wall layer.

The protein resides in the secreted. It is found in the cell wall. The protein localises to the cell membrane. Functionally, GPI-anchored cell wall protein involved in stabilizing the cell wall. This is GPI-anchored hemophore ARB_02741 from Arthroderma benhamiae (strain ATCC MYA-4681 / CBS 112371) (Trichophyton mentagrophytes).